The primary structure comprises 170 residues: uncharacterized protein (170 aa).

5 helical membrane-spanning segments follow: residues 21 to 41 (NISLFGCLLVLSAGIIFAAVL), 55 to 75 (AYTSVSIVLGTITTLPFTLLL), 86 to 106 (TGIAGLLYLAIGCSWLAYWLW), 117 to 137 (ISGVLVALEPLFGILFAVSLL), and 143 to 163 (FSAALGITIIMLATLGSTLLP). In terms of domain architecture, EamA spans 35–161 (IIFAAVLRWT…IMLATLGSTL (127 aa)).

The protein belongs to the EamA transporter family.

Its subcellular location is the cell membrane. This is an uncharacterized protein from Haemophilus influenzae (strain ATCC 51907 / DSM 11121 / KW20 / Rd).